We begin with the raw amino-acid sequence, 163 residues long: Cyanate hydratase (163 aa).

Active-site residues include Arg103, Glu106, and Ser129.

This sequence belongs to the cyanase family.

The catalysed reaction is cyanate + hydrogencarbonate + 3 H(+) = NH4(+) + 2 CO2. In terms of biological role, catalyzes the reaction of cyanate with bicarbonate to produce ammonia and carbon dioxide. The sequence is that of Cyanate hydratase from Ajellomyces capsulatus (strain H143) (Darling's disease fungus).